Consider the following 156-residue polypeptide: Small ribosomal subunit protein uS7 (156 aa).

This sequence belongs to the universal ribosomal protein uS7 family. In terms of assembly, part of the 30S ribosomal subunit. Contacts proteins S9 and S11.

Functionally, one of the primary rRNA binding proteins, it binds directly to 16S rRNA where it nucleates assembly of the head domain of the 30S subunit. Is located at the subunit interface close to the decoding center, probably blocks exit of the E-site tRNA. This is Small ribosomal subunit protein uS7 from Clostridium tetani (strain Massachusetts / E88).